The primary structure comprises 748 residues: Rho GTPase-activating protein 24 (748 aa).

The disordered stretch occupies residues Met1–Ala20. The segment covering Ser7 to Gln18 has biased composition (polar residues). In terms of domain architecture, PH spans Asn19 to Trp125. The region spanning Gln135 to Phe329 is the Rho-GAP domain. Disordered stretches follow at residues Thr354 to Ser476 and Asp582 to His641. 2 stretches are compositionally biased toward polar residues: residues Gly356–Cys374 and Pro382–Asn405. Residues Ser369, Ser391, Ser396, Ser398, Ser402, Ser413, Ser415, and Ser437 each carry the phosphoserine modification. The segment covering Ile432–Ser476 has biased composition (polar residues). Thr452 carries the phosphothreonine modification. The span at Asp600 to Ser615 shows a compositional bias: basic and acidic residues. Residues Gly617–His641 are compositionally biased toward low complexity. A coiled-coil region spans residues Ser649–Phe729.

Interacts with FLNA. In terms of processing, phosphorylated by ROCK, leading to activate the RacGAP activity. Isoform 1 is widely expressed with a higher level in kidney. Isoform 2 is mainly expressed in endothelial cells.

The protein resides in the cytoplasm. It is found in the cytoskeleton. It localises to the cell junction. The protein localises to the adherens junction. Its subcellular location is the focal adhesion. The protein resides in the cell projection. Rho GTPase-activating protein involved in cell polarity, cell morphology and cytoskeletal organization. Acts as a GTPase activator for the Rac-type GTPase by converting it to an inactive GDP-bound state. Controls actin remodeling by inactivating Rac downstream of Rho leading to suppress leading edge protrusion and promotes cell retraction to achieve cellular polarity. Able to suppress RAC1 and CDC42 activity in vitro. Overexpression induces cell rounding with partial or complete disruption of actin stress fibers and formation of membrane ruffles, lamellipodia, and filopodia. Isoform 2 is a vascular cell-specific GAP involved in modulation of angiogenesis. This Homo sapiens (Human) protein is Rho GTPase-activating protein 24 (ARHGAP24).